Reading from the N-terminus, the 133-residue chain is ATP synthase epsilon chain, chloroplastic (133 aa).

It belongs to the ATPase epsilon chain family. In terms of assembly, F-type ATPases have 2 components, CF(1) - the catalytic core - and CF(0) - the membrane proton channel. CF(1) has five subunits: alpha(3), beta(3), gamma(1), delta(1), epsilon(1). CF(0) has three main subunits: a, b and c.

It localises to the plastid. The protein resides in the chloroplast thylakoid membrane. Its function is as follows. Produces ATP from ADP in the presence of a proton gradient across the membrane. The sequence is that of ATP synthase epsilon chain, chloroplastic from Trieres chinensis (Marine centric diatom).